The chain runs to 379 residues: Zinc metalloproteinase nas-20 (379 aa).

The first 20 residues, 1 to 20 (MKITVNFLLVALIGVPSVLS), serve as a signal peptide directing secretion. Positions 21 to 29 (DRHITRDKR) are excised as a propeptide. The Peptidase M12A domain occupies 30–208 (QAMRDYAKWE…VLLNKFYGCN (179 aa)). Asn67 carries an N-linked (GlcNAc...) asparagine glycan. 4 disulfides stabilise this stretch: Cys70–Cys207, Cys91–Cys111, Cys209–Cys229, and Cys234–Cys243. Residue His119 participates in Zn(2+) binding. Glu120 is an active-site residue. Zn(2+) is bound by residues His123 and His129. An N-linked (GlcNAc...) asparagine glycan is attached at Asn185. In terms of domain architecture, EGF-like spans 203–244 (KFYGCNCDNHPRKLDCKNGGYQNPANCEECLCTDGFNGQLCD). 2 N-linked (GlcNAc...) asparagine glycosylation sites follow: Asn337 and Asn370.

The cofactor is Zn(2+).

The protein resides in the secreted. In terms of biological role, metalloprotease. The chain is Zinc metalloproteinase nas-20 (nas-20) from Caenorhabditis elegans.